The chain runs to 352 residues: tRNA N6-adenosine threonylcarbamoyltransferase (352 aa).

Residues His117 and His121 each coordinate Fe cation. Residues 140 to 144 (LVSGG), Asp173, Gly186, and Asn287 each bind substrate. Residue Asp315 coordinates Fe cation.

The protein belongs to the KAE1 / TsaD family. The cofactor is Fe(2+).

It localises to the cytoplasm. It carries out the reaction L-threonylcarbamoyladenylate + adenosine(37) in tRNA = N(6)-L-threonylcarbamoyladenosine(37) in tRNA + AMP + H(+). Its function is as follows. Required for the formation of a threonylcarbamoyl group on adenosine at position 37 (t(6)A37) in tRNAs that read codons beginning with adenine. Is involved in the transfer of the threonylcarbamoyl moiety of threonylcarbamoyl-AMP (TC-AMP) to the N6 group of A37, together with TsaE and TsaB. TsaD likely plays a direct catalytic role in this reaction. The sequence is that of tRNA N6-adenosine threonylcarbamoyltransferase from Psychrobacter cryohalolentis (strain ATCC BAA-1226 / DSM 17306 / VKM B-2378 / K5).